We begin with the raw amino-acid sequence, 550 residues long: MASPLNRPGLRAAAASAALTLVALSANVPAAQAIPPPSVDPAMVPADARPGPDQPMRRSNSCSTPITVRNPDVAQLAPGFNLVNISKAWQYSTGNGVPVAVIDTGVSPNPRLPVVPGGDYIMGEDGLSDCDAHGTVVSSIIAAAPLGILPMPRAMPATAAFPPPAGPPPVTAAPAPPVEVPPPMPPPPPVTITQTVAPPPPPPEDAGAMAPSNGPPDPQTEDEPAVPPPPPGAPDGVVGVAPHATIISIRQSSRAFEPVNPSSAGPNSDEKVKAGTLDSVARAVVHAANMGAKVINISVTACLPAAAPGDQRVLGAALWYAATVKDAVIVAAAGNDGEAGCGNNPMYDPLDPSDPRDWHQVTVVSSPSWFSDYVLSVGAVDAYGAALDKSMSGPWVGVAAPGTHIMGLSPQGGGPVNAYPPSRPGEKNMPFWGTSFSAAYVSGVAALVRAKFPELTAYQVINRIVQSAHNPPAGVDNKLGYGLVDPVAALTFNIPSGDRMAPGAQSRVITPAAPPPPPDHRARNIAIGFVGAVATGVLAMAIGARLRRAR.

The signal sequence occupies residues methionine 1–alanine 33. Positions isoleucine 34–cysteine 62 are disordered. Residues glycine 79–leucine 490 enclose the Peptidase S8 domain. Active-site charge relay system residues include aspartate 103 and histidine 133. The span at proline 168–valine 190 shows a compositional bias: pro residues. The disordered stretch occupies residues proline 168–glycine 236. The active-site Charge relay system is the serine 435. A helical membrane pass occupies residues asparagine 524–alanine 544.

This sequence belongs to the peptidase S8 family.

Its subcellular location is the cell membrane. The polypeptide is Mycosin-2 (Mycobacterium tuberculosis (strain ATCC 25618 / H37Rv)).